The chain runs to 494 residues: 4-hydroxyphenylacetate 3-monooxygenase oxygenase component (494 aa).

Substrate is bound by residues 103 to 107 (RSPDY) and His149. FAD contacts are provided by residues 149-151 (HTL), 155-158 (QMNR), and Thr192. Residue 205–206 (ST) participates in substrate binding. 455–458 (DPVR) contacts FAD.

Belongs to the FADH(2)-utilizing monooxygenase family. As to quaternary structure, 4-HPA 3-monooxygenase consists of a reductase component HpaI and an oxygenase component HpaH.

It carries out the reaction 4-hydroxyphenylacetate + FADH2 + O2 = 3,4-dihydroxyphenylacetate + FAD + H2O + H(+). The protein operates within aromatic compound metabolism; 4-hydroxyphenylacetate degradation; pyruvate and succinate semialdehyde from 4-hydroxyphenylacetate: step 1/7. In terms of biological role, utilizes FADH(2) supplied by HpaI, to catalyze the hydroxylation of 4-hydroxyphenylacetic acid, leading to the production of 3,4-dihydroxyphenylacetic acid (DHPA). The polypeptide is 4-hydroxyphenylacetate 3-monooxygenase oxygenase component (hpaH) (Geobacillus sp. (strain PA-9)).